The sequence spans 111 residues: uncharacterized protein (111 aa).

2 consecutive transmembrane segments (helical) span residues 45 to 65 (AFLIPVKYTAATVLLALLLVI) and 91 to 111 (LPAGIGLAVLTKVLKHLILHI).

The protein localises to the cell membrane. This is an uncharacterized protein from Methanothermobacter thermautotrophicus (strain ATCC 29096 / DSM 1053 / JCM 10044 / NBRC 100330 / Delta H) (Methanobacterium thermoautotrophicum).